The primary structure comprises 396 residues: 8-amino-7-oxononanoate synthase (396 aa).

Arg-19 contributes to the substrate binding site. 106–107 (GY) contacts pyridoxal 5'-phosphate. His-131 lines the substrate pocket. Pyridoxal 5'-phosphate is bound by residues Ser-176, His-204, and Thr-233. Position 236 is an N6-(pyridoxal phosphate)lysine (Lys-236). Thr-350 lines the substrate pocket.

It belongs to the class-II pyridoxal-phosphate-dependent aminotransferase family. BioF subfamily. In terms of assembly, homodimer. Pyridoxal 5'-phosphate serves as cofactor.

The enzyme catalyses 6-carboxyhexanoyl-[ACP] + L-alanine + H(+) = (8S)-8-amino-7-oxononanoate + holo-[ACP] + CO2. Its pathway is cofactor biosynthesis; biotin biosynthesis. In terms of biological role, catalyzes the decarboxylative condensation of pimeloyl-[acyl-carrier protein] and L-alanine to produce 8-amino-7-oxononanoate (AON), [acyl-carrier protein], and carbon dioxide. This chain is 8-amino-7-oxononanoate synthase, found in Pseudomonas syringae pv. syringae (strain B728a).